The sequence spans 469 residues: 3-isopropylmalate dehydratase large subunit (469 aa).

3 residues coordinate [4Fe-4S] cluster: Cys350, Cys410, and Cys413.

It belongs to the aconitase/IPM isomerase family. LeuC type 1 subfamily. Heterodimer of LeuC and LeuD. The cofactor is [4Fe-4S] cluster.

It catalyses the reaction (2R,3S)-3-isopropylmalate = (2S)-2-isopropylmalate. It participates in amino-acid biosynthesis; L-leucine biosynthesis; L-leucine from 3-methyl-2-oxobutanoate: step 2/4. Functionally, catalyzes the isomerization between 2-isopropylmalate and 3-isopropylmalate, via the formation of 2-isopropylmaleate. This chain is 3-isopropylmalate dehydratase large subunit, found in Rhizobium leguminosarum bv. trifolii (strain WSM2304).